The chain runs to 393 residues: Probable tRNA sulfurtransferase (393 aa).

In terms of domain architecture, THUMP spans 61–168 (DEVIESLTRV…GDVINIYSIE (108 aa)). Residues 186–187 (LL), 211–212 (YF), arginine 268, glycine 290, and glutamine 299 each bind ATP.

The protein belongs to the ThiI family.

The protein resides in the cytoplasm. The catalysed reaction is [ThiI sulfur-carrier protein]-S-sulfanyl-L-cysteine + a uridine in tRNA + 2 reduced [2Fe-2S]-[ferredoxin] + ATP + H(+) = [ThiI sulfur-carrier protein]-L-cysteine + a 4-thiouridine in tRNA + 2 oxidized [2Fe-2S]-[ferredoxin] + AMP + diphosphate. The enzyme catalyses [ThiS sulfur-carrier protein]-C-terminal Gly-Gly-AMP + S-sulfanyl-L-cysteinyl-[cysteine desulfurase] + AH2 = [ThiS sulfur-carrier protein]-C-terminal-Gly-aminoethanethioate + L-cysteinyl-[cysteine desulfurase] + A + AMP + 2 H(+). It functions in the pathway cofactor biosynthesis; thiamine diphosphate biosynthesis. Catalyzes the ATP-dependent transfer of a sulfur to tRNA to produce 4-thiouridine in position 8 of tRNAs, which functions as a near-UV photosensor. Also catalyzes the transfer of sulfur to the sulfur carrier protein ThiS, forming ThiS-thiocarboxylate. This is a step in the synthesis of thiazole, in the thiamine biosynthesis pathway. The sulfur is donated as persulfide by IscS. The chain is Probable tRNA sulfurtransferase from Lachnospira eligens (strain ATCC 27750 / DSM 3376 / VPI C15-48 / C15-B4) (Eubacterium eligens).